The primary structure comprises 176 residues: Shikimate kinase (176 aa).

12 to 17 lines the ATP pocket; the sequence is GSGKST. Ser-16 contributes to the Mg(2+) binding site. Substrate is bound by residues Asp-34, Arg-58, and Gly-80. Arg-117 provides a ligand contact to ATP. Residue Arg-136 coordinates substrate. Arg-153 serves as a coordination point for ATP.

Belongs to the shikimate kinase family. As to quaternary structure, monomer. Requires Mg(2+) as cofactor.

Its subcellular location is the cytoplasm. The enzyme catalyses shikimate + ATP = 3-phosphoshikimate + ADP + H(+). Its pathway is metabolic intermediate biosynthesis; chorismate biosynthesis; chorismate from D-erythrose 4-phosphate and phosphoenolpyruvate: step 5/7. In terms of biological role, catalyzes the specific phosphorylation of the 3-hydroxyl group of shikimic acid using ATP as a cosubstrate. The protein is Shikimate kinase of Mycobacterium bovis (strain ATCC BAA-935 / AF2122/97).